Reading from the N-terminus, the 577-residue chain is Proline--tRNA ligase (577 aa).

Belongs to the class-II aminoacyl-tRNA synthetase family. ProS type 1 subfamily. In terms of assembly, homodimer.

It localises to the cytoplasm. The enzyme catalyses tRNA(Pro) + L-proline + ATP = L-prolyl-tRNA(Pro) + AMP + diphosphate. Functionally, catalyzes the attachment of proline to tRNA(Pro) in a two-step reaction: proline is first activated by ATP to form Pro-AMP and then transferred to the acceptor end of tRNA(Pro). As ProRS can inadvertently accommodate and process non-cognate amino acids such as alanine and cysteine, to avoid such errors it has two additional distinct editing activities against alanine. One activity is designated as 'pretransfer' editing and involves the tRNA(Pro)-independent hydrolysis of activated Ala-AMP. The other activity is designated 'posttransfer' editing and involves deacylation of mischarged Ala-tRNA(Pro). The misacylated Cys-tRNA(Pro) is not edited by ProRS. This Helicobacter pylori (strain Shi470) protein is Proline--tRNA ligase.